Reading from the N-terminus, the 116-residue chain is Large ribosomal subunit protein uL24 (116 aa).

This sequence belongs to the universal ribosomal protein uL24 family. Part of the 50S ribosomal subunit.

In terms of biological role, one of two assembly initiator proteins, it binds directly to the 5'-end of the 23S rRNA, where it nucleates assembly of the 50S subunit. Located at the polypeptide exit tunnel on the outside of the subunit. The chain is Large ribosomal subunit protein uL24 from Methanosarcina barkeri (strain Fusaro / DSM 804).